A 926-amino-acid polypeptide reads, in one-letter code: Nitrate reductase [NADH] (926 aa).

The interval 1-85 (MAASVDRQYH…SDSEEDDDEN (85 aa)) is disordered. Polar residues predominate over residues 36-46 (YTFSNPPSSNG). Over residues 58–73 (DNNSNSNNGSNNNNNR) the composition is skewed to low complexity. C204 is a binding site for Mo-molybdopterin. Residues 551 to 626 (SKMYSMSEVK…LEDFRIGELI (76 aa)) enclose the Cytochrome b5 heme-binding domain. Heme-binding residues include H586 and H609. Residues 670 to 782 (RVKIPCKLIE…KGPLGHIEYL (113 aa)) form the FAD-binding FR-type domain. FAD-binding positions include 722–725 (RAYT), 739–743 (VVKVY), F744, F751, 756–758 (VMS), and T809.

It belongs to the nitrate reductase family. As to quaternary structure, homodimer. FAD serves as cofactor. Requires heme as cofactor. Mo-molybdopterin is required as a cofactor.

It carries out the reaction nitrite + NAD(+) + H2O = nitrate + NADH + H(+). Functionally, nitrate reductase is a key enzyme involved in the first step of nitrate assimilation in plants, fungi and bacteria. This chain is Nitrate reductase [NADH] (NIA), found in Spinacia oleracea (Spinach).